The chain runs to 485 residues: Cysteine--tRNA ligase (485 aa).

Residue Cys-27 participates in Zn(2+) binding. The short motif at 29-39 (ITAYDLCHIGH) is the 'HIGH' region element. Residues Cys-208, His-233, and Glu-237 each coordinate Zn(2+). The 'KMSKS' region signature appears at 265–269 (KMSKS). Lys-268 provides a ligand contact to ATP.

It belongs to the class-I aminoacyl-tRNA synthetase family. As to quaternary structure, monomer. It depends on Zn(2+) as a cofactor.

It is found in the cytoplasm. The enzyme catalyses tRNA(Cys) + L-cysteine + ATP = L-cysteinyl-tRNA(Cys) + AMP + diphosphate. This Maridesulfovibrio salexigens (strain ATCC 14822 / DSM 2638 / NCIMB 8403 / VKM B-1763) (Desulfovibrio salexigens) protein is Cysteine--tRNA ligase.